The chain runs to 95 residues: uncharacterized protein (95 aa).

In terms of domain architecture, ABM spans 2-92; the sequence is VREAAMLHIK…YTPFPTVEHF (91 aa).

This is an uncharacterized protein from Bacillus subtilis (strain 168).